We begin with the raw amino-acid sequence, 474 residues long: Cyclin-dependent kinase 2 homolog (474 aa).

The 440-residue stretch at 7–446 (YRHVVKLGEG…AAEAVHHPYL (440 aa)) folds into the Protein kinase domain. ATP contacts are provided by residues 13–21 (LGEGTYGMV) and Lys36. Thr17 bears the Phosphothreonine mark. Position 18 is a phosphotyrosine (Tyr18). Asp131 (proton acceptor) is an active-site residue. A disordered region spans residues 150 to 200 (TALPSSPQQSMRVPHAGGTNGEAGRASANGNEHAPRPTAAEGSVSPWEEAA). At Ser230 the chain carries Phosphoserine. Over residues 334–354 (QQLQAQQQQPQQGSSPSHSSS) the composition is skewed to low complexity. The segment at 334 to 356 (QQLQAQQQQPQQGSSPSHSSSRA) is disordered.

The protein belongs to the protein kinase superfamily. CMGC Ser/Thr protein kinase family. CDC2/CDKX subfamily. In terms of assembly, may form a complex composed of at least the catalytic subunit CRK2 and a cyclin. It depends on Mg(2+) as a cofactor.

It localises to the cytoplasm. It carries out the reaction L-seryl-[protein] + ATP = O-phospho-L-seryl-[protein] + ADP + H(+). The enzyme catalyses L-threonyl-[protein] + ATP = O-phospho-L-threonyl-[protein] + ADP + H(+). It catalyses the reaction [DNA-directed RNA polymerase] + ATP = phospho-[DNA-directed RNA polymerase] + ADP + H(+). With respect to regulation, phosphorylation at Thr-17 or Tyr-18 inactivates the enzyme, while phosphorylation at Ser-230 activates it. Serine/threonine-protein kinase. Involved in the control of the cell cycle. Required for entry into S-phase and mitosis. Probable component of the kinase complex that phosphorylates the repetitive C-terminus of RNA polymerase II. This Crithidia fasciculata protein is Cyclin-dependent kinase 2 homolog.